We begin with the raw amino-acid sequence, 97 residues long: Citrate lyase acyl carrier protein (97 aa).

Ser-14 is subject to O-(phosphoribosyl dephospho-coenzyme A)serine.

The protein belongs to the CitD family. Oligomer with a subunit composition of (alpha,beta,gamma)6.

It localises to the cytoplasm. Functionally, covalent carrier of the coenzyme of citrate lyase. The sequence is that of Citrate lyase acyl carrier protein from Klebsiella pneumoniae subsp. pneumoniae (strain ATCC 700721 / MGH 78578).